A 55-amino-acid chain; its full sequence is Large ribosomal subunit protein bL33 (55 aa).

This sequence belongs to the bacterial ribosomal protein bL33 family.

This is Large ribosomal subunit protein bL33 from Dinoroseobacter shibae (strain DSM 16493 / NCIMB 14021 / DFL 12).